Consider the following 195-residue polypeptide: ATP-dependent Clp protease proteolytic subunit 2 (195 aa).

Residue serine 98 is the Nucleophile of the active site. Histidine 123 is an active-site residue.

The protein belongs to the peptidase S14 family. In terms of assembly, fourteen ClpP subunits assemble into 2 heptameric rings which stack back to back to give a disk-like structure with a central cavity, resembling the structure of eukaryotic proteasomes.

Its subcellular location is the cytoplasm. The catalysed reaction is Hydrolysis of proteins to small peptides in the presence of ATP and magnesium. alpha-casein is the usual test substrate. In the absence of ATP, only oligopeptides shorter than five residues are hydrolyzed (such as succinyl-Leu-Tyr-|-NHMec, and Leu-Tyr-Leu-|-Tyr-Trp, in which cleavage of the -Tyr-|-Leu- and -Tyr-|-Trp bonds also occurs).. Cleaves peptides in various proteins in a process that requires ATP hydrolysis. Has a chymotrypsin-like activity. Plays a major role in the degradation of misfolded proteins. ClpXP2 is involved in the complete degradation of the Site-2 clipped anti-sigma-W factor RsiW. This results in the release of SigW and the transcription activation of the genes under the control of the sigma-W factor. The chain is ATP-dependent Clp protease proteolytic subunit 2 from Shouchella clausii (strain KSM-K16) (Alkalihalobacillus clausii).